Here is a 599-residue protein sequence, read N- to C-terminus: Aspartate--tRNA ligase (599 aa).

L-aspartate is bound at residue Glu180. Residues 204 to 207 (QIFK) form an aspartate region. L-aspartate is bound at residue Arg226. ATP contacts are provided by residues 226–228 (RDE) and Gln235. Residue His454 participates in L-aspartate binding. Glu488 is a binding site for ATP. Arg495 contacts L-aspartate. Residue 540-543 (GLDR) coordinates ATP.

This sequence belongs to the class-II aminoacyl-tRNA synthetase family. Type 1 subfamily. Homodimer.

The protein localises to the cytoplasm. It carries out the reaction tRNA(Asp) + L-aspartate + ATP = L-aspartyl-tRNA(Asp) + AMP + diphosphate. Catalyzes the attachment of L-aspartate to tRNA(Asp) in a two-step reaction: L-aspartate is first activated by ATP to form Asp-AMP and then transferred to the acceptor end of tRNA(Asp). The sequence is that of Aspartate--tRNA ligase from Clostridium botulinum (strain Alaska E43 / Type E3).